The sequence spans 92 residues: Small ribosomal subunit protein bS18 (92 aa).

Belongs to the bacterial ribosomal protein bS18 family. In terms of assembly, part of the 30S ribosomal subunit. Forms a tight heterodimer with protein bS6.

Its function is as follows. Binds as a heterodimer with protein bS6 to the central domain of the 16S rRNA, where it helps stabilize the platform of the 30S subunit. The sequence is that of Small ribosomal subunit protein bS18 from Cupriavidus taiwanensis (strain DSM 17343 / BCRC 17206 / CCUG 44338 / CIP 107171 / LMG 19424 / R1) (Ralstonia taiwanensis (strain LMG 19424)).